A 326-amino-acid chain; its full sequence is UDP-N-acetylglucosamine transporter (326 aa).

8 helical membrane passes run 8–24 (LSLG…VLTM), 42–58 (AVVV…ILLV), 138–154 (VYQW…VAFV), 174–190 (FVGL…SGFA), 210–226 (IQLG…GVYI), 247–263 (IVVI…AAVI), 269–285 (ILKG…STLI), and 296–312 (TSVF…ATFL).

It belongs to the nucleotide-sugar transporter family. SLC35A subfamily. In terms of assembly, interacts with SLC35A2; the interaction is reduced in the presence of SLC35A4. Found in a complex with SLC35A2 and SLC35A4.

Its subcellular location is the golgi apparatus membrane. Functionally, uridine diphosphate-N-acetylglucosamine (UDP-GlcNAc) transporter in the Golgi apparatus. May supply UDP-GlcNAc as substrate for Golgi-resident glycosyltransferases that generate branching of diantennary oligosaccharides. The polypeptide is UDP-N-acetylglucosamine transporter (SLC35A3) (Canis lupus familiaris (Dog)).